The sequence spans 614 residues: Zinc metalloproteinase dpy-31 (614 aa).

A signal peptide spans methionine 1 to glycine 24. A propeptide spanning residues tyrosine 25 to lysine 150 is cleaved from the precursor. Positions lysine 150–serine 349 constitute a Peptidase M12A domain. An N-linked (GlcNAc...) asparagine glycan is attached at asparagine 190. 5 disulfides stabilise this stretch: cysteine 193–cysteine 348, cysteine 216–cysteine 237, cysteine 352–cysteine 372, cysteine 374–cysteine 383, and cysteine 394–cysteine 422. Histidine 245 is a Zn(2+) binding site. Residue glutamate 246 is part of the active site. The Zn(2+) site is built by histidine 249 and histidine 255. Residues asparagine 344 to glutamate 384 enclose the EGF-like domain. Residues cysteine 394–leucine 510 enclose the CUB domain. N-linked (GlcNAc...) asparagine glycosylation occurs at asparagine 461. The TSP type-1 domain occupies asparagine 513–asparagine 562. 3 cysteine pairs are disulfide-bonded: cysteine 525–cysteine 556, cysteine 529–cysteine 561, and cysteine 541–cysteine 546.

The cofactor is Zn(2+).

Its subcellular location is the secreted. With respect to regulation, inhibited by marimastat and tripeptide hydroxamic acids. Inhibited by 1,10-phenanthroline. Its function is as follows. Metalloprotease which cleaves the carboxyl terminus of procollagens to mature collagens. Probably involved in cuticular collagen maturation. This Teladorsagia circumcincta (Brown stomach worm) protein is Zinc metalloproteinase dpy-31.